Reading from the N-terminus, the 664-residue chain is NAD(P)H-quinone oxidoreductase chain 5 (664 aa).

Transmembrane regions (helical) follow at residues 7–27 (YAWL…IGLI), 39–59 (LNAV…FGLL), 91–111 (HLSA…MIYT), 120–140 (GYVR…GLVF), 144–164 (LVQV…LIGF), 187–207 (FGLL…EFDL), 219–239 (GQIS…GPVA), 258–278 (TPIS…FLVA), 290–310 (AMNV…TIAL), 327–347 (LGYM…FHLM), 352–372 (FKAM…EVVG), 395–415 (ATTF…AGFW), 420–440 (ILGL…ATAG), 495–515 (FPLM…VPWG), 541–561 (FLIM…IASL), and 643–663 (VQFY…FFSV).

Belongs to the complex I subunit 5 family.

The protein resides in the cell membrane. The catalysed reaction is a plastoquinone + NADH + (n+1) H(+)(in) = a plastoquinol + NAD(+) + n H(+)(out). It carries out the reaction a plastoquinone + NADPH + (n+1) H(+)(in) = a plastoquinol + NADP(+) + n H(+)(out). Its function is as follows. NDH-1 shuttles electrons from NAD(P)H, via FMN and iron-sulfur (Fe-S) centers, to quinones in the respiratory chain. The immediate electron acceptor for the enzyme in this species is believed to be plastoquinone. Couples the redox reaction to proton translocation (for every two electrons transferred, four hydrogen ions are translocated across the cytoplasmic membrane), and thus conserves the redox energy in a proton gradient. The sequence is that of NAD(P)H-quinone oxidoreductase chain 5 (ndhF) from Picosynechococcus sp. (strain ATCC 27264 / PCC 7002 / PR-6) (Agmenellum quadruplicatum).